Consider the following 79-residue polypeptide: Short neurotoxin 2 (79 aa).

Positions 1–19 are cleaved as a signal peptide; the sequence is PLLLTLVVVTIVCLDLGYT. 4 disulfides stabilise this stretch: Cys-22-Cys-41, Cys-36-Cys-58, Cys-60-Cys-71, and Cys-72-Cys-77.

It belongs to the three-finger toxin family. Short-chain subfamily. Type I alpha-neurotoxin sub-subfamily. Expressed by the venom gland.

It is found in the secreted. In terms of biological role, binds to muscle nicotinic acetylcholine receptor (nAChR) and inhibit acetylcholine from binding to the receptor, thereby impairing neuromuscular transmission. The polypeptide is Short neurotoxin 2 (Hydrophis cyanocinctus (Asian annulated sea snake)).